Consider the following 205-residue polypeptide: MELNGLRVSRETQERLQHFAALFQKWAKAINLVAPSTLDDLWHRHIADSSQVFQIHPQPITWVDLGSGGGFPGVITAIFLAELQGGWVHLVESNHKKAAFLRTALRETNARGSVHSIRIEDAYTEVRECSAISARALTDLDGLIGYSSPWMLGKENCRGFFHKGRDYLREIDKARGRWEFDLLEHKSAVEQESVILEISNLRRLV.

S-adenosyl-L-methionine-binding positions include glycine 66, phenylalanine 71, 119-120 (IE), and arginine 135.

This sequence belongs to the methyltransferase superfamily. RNA methyltransferase RsmG family.

Its subcellular location is the cytoplasm. It catalyses the reaction guanosine(527) in 16S rRNA + S-adenosyl-L-methionine = N(7)-methylguanosine(527) in 16S rRNA + S-adenosyl-L-homocysteine. In terms of biological role, specifically methylates the N7 position of guanine in position 527 of 16S rRNA. This chain is Ribosomal RNA small subunit methyltransferase G, found in Rhizobium johnstonii (strain DSM 114642 / LMG 32736 / 3841) (Rhizobium leguminosarum bv. viciae).